Here is a 104-residue protein sequence, read N- to C-terminus: Late embryogenis abundant protein 41 (104 aa).

Residues 1-31 constitute a mitochondrion transit peptide; it reads MAARSLSGAVKSLCSAASGSLSCSIVLRRSY.

Belongs to the LEA type 3 family.

The protein resides in the mitochondrion. This chain is Late embryogenis abundant protein 41, found in Arabidopsis thaliana (Mouse-ear cress).